Reading from the N-terminus, the 358-residue chain is G-protein coupled receptor 87 (358 aa).

The Extracellular segment spans residues 1–47; sequence MGLNLTLTKLPGNELYSQASHTANSTSEGHGKNSTLHNKFDTIILPV. 3 N-linked (GlcNAc...) asparagine glycosylation sites follow: Asn-4, Asn-24, and Asn-33. The chain crosses the membrane as a helical span at residues 48–68; the sequence is LYLVIFVASILLNGLAVWIFF. The Cytoplasmic portion of the chain corresponds to 69–75; sequence HIRNKTS. The helical transmembrane segment at 76 to 96 threads the bilayer; the sequence is FIFYLKNIVVADLIMTLTFPF. The Extracellular segment spans residues 97–116; it reads RIVRDAGFGPWYFEFILCRY. A disulfide bridge links Cys-114 with Cys-192. Residues 117–137 form a helical membrane-spanning segment; that stretch reads TSVLFYANMYTSIVFLGLISV. Over 138-159 the chain is Cytoplasmic; that stretch reads DRYLKVVKPFGDSRMYSITFTK. A helical transmembrane segment spans residues 160–180; it reads VLSVCVWVIMAILSLPNIILT. Residues 181–208 are Extracellular-facing; sequence NGQPTKENIHDCMKLKSPLGAKWHMAVT. The chain crosses the membrane as a helical span at residues 209 to 229; that stretch reads YVDSCLFVAVLVILIGCYIAI. Over 230–256 the chain is Cytoplasmic; that stretch reads SRYIHKSSRQFISQSSRKRKHNQSIRV. The helical transmembrane segment at 257 to 277 threads the bilayer; that stretch reads VVAVFFTCFLPYHLCRIPFTF. Topologically, residues 278-297 are extracellular; the sequence is SNLDRLLDESAHKILYYCKE. A helical membrane pass occupies residues 298–318; it reads MTLFLSACNVCLDPIIYFFMC. Residues 319–358 lie on the Cytoplasmic side of the membrane; sequence KSFSRRLFKKSNIRTRSESIRSLQSVRRSEVRIYYDYTDV.

It belongs to the G-protein coupled receptor 1 family. As to expression, expressed at high levels in testis and brain and to a lesser extent placenta, ovary, prostate, and skeletal muscle but not in heart, lung, kidney, liver or intestine.

It is found in the cell membrane. In terms of biological role, receptor for lysophosphatidic acid (LPA). Necessary for p53/TP53-dependent survival in response to DNA damage. Promotes the Hippo-YAP signaling pathway and thereby modulates glycolysis and oxidative stress production by the regulation of hexokinase-2/HK2. The chain is G-protein coupled receptor 87 (Gpr87) from Mus musculus (Mouse).